Here is a 357-residue protein sequence, read N- to C-terminus: Serpentine receptor class epsilon-30 (357 aa).

Helical transmembrane passes span I31 to M51, L61 to I81, L121 to L141, I165 to I185, F192 to I212, L253 to F273, and L283 to I303.

This sequence belongs to the nematode receptor-like protein sre family.

Its subcellular location is the membrane. This is Serpentine receptor class epsilon-30 (sre-30) from Caenorhabditis elegans.